A 698-amino-acid chain; its full sequence is eEF1A lysine and N-terminal methyltransferase (698 aa).

Methionine 1 carries the post-translational modification N-acetylmethionine. Serine 267 carries the phosphoserine modification. Residues 431–461 (KDTSHRAQKKRKKDRKKQRPADTSEDFPPAP) form a disordered region. Residues 436–448 (RAQKKRKKDRKKQ) are compositionally biased toward basic residues.

Belongs to the methyltransferase superfamily. In terms of assembly, forms a tripartite complex containing GAB1, METTL13 and SPRY2. Within the complex interacts with GAB1 and SPRY2. As to expression, expressed in the inner ear (at protein level). Expression is detected in the cochlear duct, spiral limbus region, efferent and afferent nerves, and in spiral ganglion neurons (at protein level).

The protein resides in the cytoplasm. It localises to the nucleus. It is found in the mitochondrion. It catalyses the reaction L-lysyl-[protein] + S-adenosyl-L-methionine = N(6)-methyl-L-lysyl-[protein] + S-adenosyl-L-homocysteine + H(+). It carries out the reaction N(6)-methyl-L-lysyl-[protein] + S-adenosyl-L-methionine = N(6),N(6)-dimethyl-L-lysyl-[protein] + S-adenosyl-L-homocysteine + H(+). The enzyme catalyses N-terminal glycyl-L-lysyl-L-glutamyl-[protein] + 3 S-adenosyl-L-methionine = N-terminal N,N,N-trimethyl-glycyl-L-lysyl-L-glutamyl-[protein] + 3 S-adenosyl-L-homocysteine + 3 H(+). Functionally, dual methyltransferase that catalyzes methylation of elongation factor 1-alpha (EEF1A1 and EEF1A2) at two different positions, and is therefore involved in the regulation of mRNA translation. Via its C-terminus, methylates EEF1A1 and EEF1A2 at the N-terminal residue 'Gly-2'. Via its N-terminus dimethylates EEF1A1 and EEF1A2 at residue 'Lys-55'. Has no activity towards core histones H2A, H2B, H3 and H4. This Mus musculus (Mouse) protein is eEF1A lysine and N-terminal methyltransferase.